The following is a 91-amino-acid chain: Acylphosphatase (91 aa).

The region spanning 5–91 (RLTAWVRGHV…RGSFTGFEER (87 aa)) is the Acylphosphatase-like domain. Catalysis depends on residues R20 and N38.

The protein belongs to the acylphosphatase family.

The enzyme catalyses an acyl phosphate + H2O = a carboxylate + phosphate + H(+). In Thermobifida fusca (strain YX), this protein is Acylphosphatase (acyP).